The primary structure comprises 493 residues: Trigger factor (493 aa).

The PPIase FKBP-type domain occupies 162–243 (GDFVSLDLSA…VRGVKEKELP (82 aa)). The interval 432 to 493 (ELALPARPAP…AAVDSGDRDI (62 aa)) is disordered. The segment covering 449–470 (HAGHDHEGHDHADHAGHDHAGD) has biased composition (basic and acidic residues). Residues 474–485 (AEPAEAPAATAA) are compositionally biased toward low complexity.

It belongs to the FKBP-type PPIase family. Tig subfamily.

The protein localises to the cytoplasm. It carries out the reaction [protein]-peptidylproline (omega=180) = [protein]-peptidylproline (omega=0). Its function is as follows. Involved in protein export. Acts as a chaperone by maintaining the newly synthesized protein in an open conformation. Functions as a peptidyl-prolyl cis-trans isomerase. This chain is Trigger factor, found in Frankia alni (strain DSM 45986 / CECT 9034 / ACN14a).